Consider the following 760-residue polypeptide: Golgin subfamily A member 5 (760 aa).

At M1–R727 the chain is on the cytoplasmic side. Polar residues predominate over residues V95–F111. 3 disordered regions span residues V95 to P114, D126 to D216, and T432 to K456. Over residues Q135–V146 the composition is skewed to basic and acidic residues. Positions K148 to L166 are enriched in polar residues. Positions P174 to S201 are enriched in low complexity. Positions Q249–H668 form a coiled coil. Over residues L441 to S450 the composition is skewed to polar residues. Residues V728–Y748 form a helical; Anchor for type IV membrane protein membrane-spanning segment. Topologically, residues T749–R760 are extracellular.

It is found in the golgi apparatus membrane. Its function is as follows. Involved in maintaining Golgi structure. Stimulates the formation of Golgi stacks and ribbons. Involved in intra-Golgi retrograde transport. In Danio rerio (Zebrafish), this protein is Golgin subfamily A member 5 (golga5).